We begin with the raw amino-acid sequence, 314 residues long: MAFLHNGNHTAVTEFILLGLTDDPVFRVILFTIILCIYLVTVSGNLSTILLIRVSSQLHHPMYFFLSHLASVDIGYSSSVTPNMLANFLVEKNTISYLGCTIQLSLAAFCGTVECFLLATMAYDRFMAICSPLLYSTKMSTQVCIQLIVGSYIGGFLNASSFTLFFLSFLFCGPNRINHFYCDFAPLVALSCSDVSVSEVVTSFFSGSVTMITMLVIAISYTYILITILKMRSTEGRHKAFSTCTSHLTAVTLFYGTITFIYVMPKSSFSTDQNKVVSVFYMVVIPMLNPLIYSLRNNEIKDALKRHLGKKIFS.

Topologically, residues 1–28 (MAFLHNGNHTAVTEFILLGLTDDPVFRV) are extracellular. The N-linked (GlcNAc...) asparagine glycan is linked to Asn8. A helical membrane pass occupies residues 29–49 (ILFTIILCIYLVTVSGNLSTI). Topologically, residues 50–57 (LLIRVSSQ) are cytoplasmic. A helical membrane pass occupies residues 58–78 (LHHPMYFFLSHLASVDIGYSS). The Extracellular portion of the chain corresponds to 79 to 102 (SVTPNMLANFLVEKNTISYLGCTI). A disulfide bond links Cys100 and Cys192. The helical transmembrane segment at 103–123 (QLSLAAFCGTVECFLLATMAY) threads the bilayer. Residues 124-136 (DRFMAICSPLLYS) lie on the Cytoplasmic side of the membrane. Residues 137 to 157 (TKMSTQVCIQLIVGSYIGGFL) traverse the membrane as a helical segment. At 158 to 199 (NASSFTLFFLSFLFCGPNRINHFYCDFAPLVALSCSDVSVSE) the chain is on the extracellular side. Residues 200-220 (VVTSFFSGSVTMITMLVIAIS) form a helical membrane-spanning segment. Residues 221–240 (YTYILITILKMRSTEGRHKA) are Cytoplasmic-facing. The chain crosses the membrane as a helical span at residues 241–261 (FSTCTSHLTAVTLFYGTITFI). At 262-274 (YVMPKSSFSTDQN) the chain is on the extracellular side. Residues 275–295 (KVVSVFYMVVIPMLNPLIYSL) form a helical membrane-spanning segment. Over 296 to 314 (RNNEIKDALKRHLGKKIFS) the chain is Cytoplasmic.

It belongs to the G-protein coupled receptor 1 family.

The protein localises to the cell membrane. Its function is as follows. Potential odorant receptor. The polypeptide is Olfactory receptor 5P68 (Mus musculus (Mouse)).